A 259-amino-acid chain; its full sequence is Small ribosomal subunit protein mS23 (259 aa).

A compositionally biased stretch (polar residues) spans 230–244 (RAASFTGSALPSSEE). A disordered region spans residues 230 to 259 (RAASFTGSALPSSEESAPVDEETEKVPQQV).

It belongs to the mitochondrion-specific ribosomal protein mS23 family. As to quaternary structure, component of the mitochondrial small ribosomal subunit.

The protein resides in the mitochondrion. This chain is Small ribosomal subunit protein mS23 (rsm25), found in Aspergillus terreus (strain NIH 2624 / FGSC A1156).